Consider the following 226-residue polypeptide: Large ribosomal subunit protein uL4 (226 aa).

The disordered stretch occupies residues 47–74; sequence GTAKAKTRSEVSGGGRKPWPQKHTGRAR.

This sequence belongs to the universal ribosomal protein uL4 family. In terms of assembly, part of the 50S ribosomal subunit.

Functionally, one of the primary rRNA binding proteins, this protein initially binds near the 5'-end of the 23S rRNA. It is important during the early stages of 50S assembly. It makes multiple contacts with different domains of the 23S rRNA in the assembled 50S subunit and ribosome. Its function is as follows. Forms part of the polypeptide exit tunnel. This chain is Large ribosomal subunit protein uL4, found in Kosmotoga olearia (strain ATCC BAA-1733 / DSM 21960 / TBF 19.5.1).